We begin with the raw amino-acid sequence, 777 residues long: Type IV pilus biogenesis and competence protein PilQ (777 aa).

An N-terminal signal peptide occupies residues Met-1–Ala-24. Composition is skewed to low complexity over residues Ala-135–Pro-154 and Ala-197–Gln-233. Disordered stretches follow at residues Ala-135 to Thr-156 and Ala-197 to Ile-236.

This sequence belongs to the bacterial secretin family. PilQ subfamily. In terms of assembly, homododecamer. Tetramer of trimer.

Its subcellular location is the cell outer membrane. Functionally, required for type IV pilus biogenesis and competence. Could function as a pore for exit of the pilus but also as a channel for entry of heme and antimicrobial agents and uptake of transforming DNA. The chain is Type IV pilus biogenesis and competence protein PilQ (pilQ) from Neisseria meningitidis serogroup B / serotype 15 (strain H44/76).